We begin with the raw amino-acid sequence, 565 residues long: Membrane protein insertase YidC (565 aa).

6 helical membrane passes run 6–26 (VLLI…WSKN), 348–368 (LMAL…SLLH), 370–390 (WGWA…PLSA), 437–457 (GGCF…WVLV), 479–499 (PYFI…KLTP), and 516–536 (PLIF…YWVI).

This sequence belongs to the OXA1/ALB3/YidC family. Type 1 subfamily. Interacts with the Sec translocase complex via SecD. Specifically interacts with transmembrane segments of nascent integral membrane proteins during membrane integration.

It is found in the cell inner membrane. Required for the insertion and/or proper folding and/or complex formation of integral membrane proteins into the membrane. Involved in integration of membrane proteins that insert both dependently and independently of the Sec translocase complex, as well as at least some lipoproteins. Aids folding of multispanning membrane proteins. The chain is Membrane protein insertase YidC from Xylella fastidiosa (strain M23).